Consider the following 181-residue polypeptide: Oligoribonuclease (181 aa).

Residues 8–171 form the Exonuclease domain; the sequence is LIWVDLEMTG…VDIQESIAEL (164 aa). Residue Tyr-129 is part of the active site.

This sequence belongs to the oligoribonuclease family.

The protein resides in the cytoplasm. Its function is as follows. 3'-to-5' exoribonuclease specific for small oligoribonucleotides. The chain is Oligoribonuclease from Shewanella loihica (strain ATCC BAA-1088 / PV-4).